The following is a 258-amino-acid chain: DNA repair protein RecO (258 aa).

Belongs to the RecO family.

Functionally, involved in DNA repair and RecF pathway recombination. The chain is DNA repair protein RecO from Oceanobacillus iheyensis (strain DSM 14371 / CIP 107618 / JCM 11309 / KCTC 3954 / HTE831).